A 247-amino-acid polypeptide reads, in one-letter code: Uridylate kinase (247 aa).

11-14 (KASG) lines the ATP pocket. The segment at 19–24 (GKQGFG) is involved in allosteric activation by GTP. Residue glycine 53 participates in UMP binding. Positions 54 and 58 each coordinate ATP. UMP is bound by residues aspartate 73 and 134 to 141 (TGNPFFTT). ATP is bound by residues threonine 161, glutamine 162, tyrosine 167, and aspartate 170.

This sequence belongs to the UMP kinase family. Homohexamer.

The protein resides in the cytoplasm. It catalyses the reaction UMP + ATP = UDP + ADP. It functions in the pathway pyrimidine metabolism; CTP biosynthesis via de novo pathway; UDP from UMP (UMPK route): step 1/1. Allosterically activated by GTP. Inhibited by UTP. In terms of biological role, catalyzes the reversible phosphorylation of UMP to UDP. The polypeptide is Uridylate kinase (Chelativorans sp. (strain BNC1)).